A 464-amino-acid chain; its full sequence is Chitobiosyldiphosphodolichol beta-mannosyltransferase (464 aa).

Over 1 to 2 (MA) the chain is Lumenal. A helical transmembrane segment spans residues 3-23 (ASCLVLLALCLLLPLLLLGGW). Residues 24-99 (KRWRRGRAAR…ELQSLAVGPR (76 aa)) are Cytoplasmic-facing. Positions 100 to 120 (VFQYGVKVVLQAMYLLWKLMW) form an intramembrane region, helical. The Cytoplasmic portion of the chain corresponds to 121-464 (REPGAYIFLQ…QTVLPLVMDT (344 aa)). The residue at position 242 (serine 242) is a Phosphoserine. The segment at 243-262 (PFRARSEPEDPVTERSAFTE) is disordered.

Belongs to the glycosyltransferase group 1 family. Glycosyltransferase 33 subfamily.

The protein resides in the endoplasmic reticulum membrane. It catalyses the reaction an N,N'-diacetylchitobiosyl-diphospho-di-trans,poly-cis-dolichol + GDP-alpha-D-mannose = a beta-D-Man-(1-&gt;4)-beta-D-GlcNAc-(1-&gt;4)-alpha-D-GlcNAc-diphospho-di-trans,poly-cis-dolichol + GDP + H(+). It participates in protein modification; protein glycosylation. In terms of biological role, mannosyltransferase that operates in the biosynthetic pathway of dolichol-linked oligosaccharides, the glycan precursors employed in protein asparagine (N)-glycosylation. The assembly of dolichol-linked oligosaccharides begins on the cytosolic side of the endoplasmic reticulum membrane and finishes in its lumen. The sequential addition of sugars to dolichol pyrophosphate produces dolichol-linked oligosaccharides containing fourteen sugars, including two GlcNAcs, nine mannoses and three glucoses. Once assembled, the oligosaccharide is transferred from the lipid to nascent proteins by oligosaccharyltransferases. Catalyzes, on the cytoplasmic face of the endoplasmic reticulum, the addition of the first mannose residues to the dolichol-linked oligosaccharide chain, to produce Man1GlcNAc(2)-PP-dolichol core oligosaccharide. Man1GlcNAc(2)-PP-dolichol is a substrate for ALG2, the following enzyme in the biosynthetic pathway. In Homo sapiens (Human), this protein is Chitobiosyldiphosphodolichol beta-mannosyltransferase.